The primary structure comprises 245 residues: 1-(5-phosphoribosyl)-5-[(5-phosphoribosylamino)methylideneamino] imidazole-4-carboxamide isomerase (245 aa).

The active-site Proton acceptor is the Asp-7. Residue Asp-129 is the Proton donor of the active site.

The protein belongs to the HisA/HisF family.

It localises to the cytoplasm. It carries out the reaction 1-(5-phospho-beta-D-ribosyl)-5-[(5-phospho-beta-D-ribosylamino)methylideneamino]imidazole-4-carboxamide = 5-[(5-phospho-1-deoxy-D-ribulos-1-ylimino)methylamino]-1-(5-phospho-beta-D-ribosyl)imidazole-4-carboxamide. It participates in amino-acid biosynthesis; L-histidine biosynthesis; L-histidine from 5-phospho-alpha-D-ribose 1-diphosphate: step 4/9. The protein is 1-(5-phosphoribosyl)-5-[(5-phosphoribosylamino)methylideneamino] imidazole-4-carboxamide isomerase of Shewanella loihica (strain ATCC BAA-1088 / PV-4).